We begin with the raw amino-acid sequence, 327 residues long: Aspartate carbamoyltransferase catalytic subunit (327 aa).

Carbamoyl phosphate-binding residues include Arg67 and Thr68. Residue Lys95 coordinates L-aspartate. Residues Arg117, His145, and Gln148 each coordinate carbamoyl phosphate. 2 residues coordinate L-aspartate: Arg178 and Arg232. Residues Gly273 and Pro274 each coordinate carbamoyl phosphate.

It belongs to the aspartate/ornithine carbamoyltransferase superfamily. ATCase family. In terms of assembly, heterododecamer (2C3:3R2) of six catalytic PyrB chains organized as two trimers (C3), and six regulatory PyrI chains organized as three dimers (R2).

It carries out the reaction carbamoyl phosphate + L-aspartate = N-carbamoyl-L-aspartate + phosphate + H(+). It participates in pyrimidine metabolism; UMP biosynthesis via de novo pathway; (S)-dihydroorotate from bicarbonate: step 2/3. In terms of biological role, catalyzes the condensation of carbamoyl phosphate and aspartate to form carbamoyl aspartate and inorganic phosphate, the committed step in the de novo pyrimidine nucleotide biosynthesis pathway. The sequence is that of Aspartate carbamoyltransferase catalytic subunit from Parvibaculum lavamentivorans (strain DS-1 / DSM 13023 / NCIMB 13966).